Consider the following 5430-residue polypeptide: Microtubule-actin cross-linking factor 1 (5430 aa).

Residues 1-47 (MSSSDEETLSERSCRSERSCRSERSYRSERSGSLSPCPPGDTLPWNL) are disordered. Residues 1-295 (MSSSDEETLS…VITYVSSIYD (295 aa)) are actin-binding. Position 4 is a phosphoserine (Ser4). Over residues 9–30 (LSERSCRSERSCRSERSYRSER) the composition is skewed to basic and acidic residues. Ser35 and Ser57 each carry phosphoserine. Calponin-homology (CH) domains follow at residues 78–181 (RVQK…LHFQ) and 194–298 (MSAK…DAFP). LRR repeat units follow at residues 148-171 (QRQV…LTLG) and 240-264 (LVDM…VAER). Position 280 is a phosphoserine (Ser280). LRR repeat units follow at residues 377–399 (LYKL…YHPN) and 441–464 (LNCE…LESG). The region spanning 868-925 (KSTLSVKAICDYRQIEITICKNDECVLEDNSQRTKWKVISPTGNEAMVPSVCLLIPPP) is the SH3 domain. One copy of the LRR 5 repeat lies at 1050 to 1073 (ISELKNIRLRLEECEQRLLKQIQS). Ser1122 carries the post-translational modification Phosphoserine. LRR repeat units lie at residues 1128–1154 (ATTL…VCLN), 1187–1210 (PADL…VKDK), and 1257–1282 (HRVI…DYRA). A phosphoserine mark is found at Ser1367 and Ser1376. 2 LRR repeats span residues 1579–1602 (QQEL…IQNH) and 1629–1653 (LTAL…TREA). Spectrin repeat units lie at residues 1816-1891 (ELQK…NFEE) and 1933-2041 (QYQQ…ALLQ). Ser1860 carries the phosphoserine modification. An LRR 11 repeat occupies 1869–1891 (KGDLRFVTISGQKVLETENNFEE). LRR repeat units lie at residues 2058–2083 (LQSM…LIQE) and 2194–2220 (IQEL…ALGS). One copy of the Spectrin 3 repeat lies at 2399–2507 (RMEEVQKEAS…TVARQKQLEE (109 aa)). Residues Ser2429 and Ser2454 each carry the phosphoserine modification. LRR repeat units follow at residues 2444–2467 (KAFL…LAGL), 2534–2557 (GVLG…QFML), and 2702–2725 (KKRL…RMNR). 2 Spectrin repeats span residues 2733–2837 (TQQF…SRLK) and 2842–2945 (KAQK…SLEE). Residues Ser2769 and Ser2895 each carry the phosphoserine modification. 3 LRR repeats span residues 2984-3009 (NKNL…YLRD), 3105-3127 (NKIQ…MLEE), and 3214-3237 (KEQV…LIQS). 13 Spectrin repeats span residues 3169-3274 (EDFY…QLQE), 3281-3383 (KFQD…QLED), 3388-3491 (AKQF…SLLE), 3714-3818 (RSQQ…ARLE), 3825-3927 (NQFW…ALDE), 4047-4152 (LAEK…KLED), 4157-4261 (AVQY…HKLE), 4267-4370 (LGQF…QQLQ), 4375-4481 (QAQG…KLEE), 4486-4589 (ATEF…RSLD), 4594-4700 (RAKQ…KLEE), 4707-4808 (QFMD…RLEQ), and 4812-4916 (QAEE…QRLE). Thr3368 is subject to Phosphothreonine. LRR repeat units lie at residues 3737–3761 (MALG…AFSI) and 3846–3870 (AQLP…QLRE). The residue at position 4074 (Ser4074) is a Phosphoserine. Lys4252 carries the N6-acetyllysine modification. One copy of the LRR 22 repeat lies at 4538–4561 (RDQIIELDQTGNQLKFLSQKQDVV). The tract at residues 4993–5023 (PTHAPFIEKSRSGSRKSLNQPTPPPMPILSQ) is disordered. Ser5009 carries the phosphoserine modification. EF-hand domains are found at residues 5083–5118 (HKKS…SKFP) and 5119–5154 (TTKL…NKDA). Ca(2+)-binding residues include Asp5096, Asp5098, Asp5100, Lys5102, Glu5107, Asp5132, Asp5134, Asp5136, Tyr5138, and Glu5143. Residues 5159–5231 (TDADKIEDEV…EFLVKNDPCR (73 aa)) enclose the GAR domain. A C-terminal tail region spans residues 5159–5430 (TDADKIEDEV…ASPRTPCPKR (272 aa)). Residues 5247 to 5430 (PEGASQGMTP…ASPRTPCPKR (184 aa)) are disordered. Over residues 5267 to 5301 (SSRAASPTRSSSSASQSNHSCTSMPSSPATPASGT) the composition is skewed to low complexity. Thr5296 bears the Phosphothreonine mark. Over residues 5317–5341 (TFHSSRTSLAGDTSNSSSPASTGAK) the composition is skewed to polar residues. Phosphoserine occurs at positions 5321 and 5334. The segment covering 5352–5366 (SRPGSRAGSRAGSRA) has biased composition (low complexity). Residues 5355-5370 (GSRAGSRAGSRASSRR) form a 4 X 4 AA tandem repeats of [GS]-S-R-[AR] region. Residues Ser5372 and Ser5375 each carry the phosphoserine modification. Residues 5381–5391 (ETQSACSDTSE) show a composition bias toward polar residues. Residues 5392–5403 (SSAAGGQGSSRR) are compositionally biased toward low complexity.

The protein belongs to the plakin or cytolinker family. As to quaternary structure, interacts with MAPRE1, CLASP1, CLASP2 and GOLGA4. Interacts with AXIN1 and LRP6. Found in a complex composed of MACF1, APC; AXIN1, CTNNB1 and GSK3B. Interacts with CAMSAP3. In terms of processing, phosphorylated on serine residues in the C-terminal tail by GSK3B. Phosphorylation inhibits microtubule-binding and this plays a critical role in bulge stem cell migration and skin wound repair. Wnt-signaling can repress phosphorylation.

It localises to the cytoplasm. It is found in the cytoskeleton. Its subcellular location is the golgi apparatus. The protein localises to the cell membrane. The protein resides in the cell projection. It localises to the ruffle membrane. It is found in the membrane. F-actin-binding protein which plays a role in cross-linking actin to other cytoskeletal proteins and also binds to microtubules. Plays an important role in ERBB2-dependent stabilization of microtubules at the cell cortex. Acts as a positive regulator of Wnt receptor signaling pathway and is involved in the translocation of AXIN1 and its associated complex (composed of APC, CTNNB1 and GSK3B) from the cytoplasm to the cell membrane. Has actin-regulated ATPase activity and is essential for controlling focal adhesions (FAs) assembly and dynamics. Interaction with CAMSAP3 at the minus ends of non-centrosomal microtubules tethers microtubules minus-ends to actin filaments, regulating focal adhesion size and cell migration. May play role in delivery of transport vesicles containing GPI-linked proteins from the trans-Golgi network through its interaction with GOLGA4. Plays a key role in wound healing and epidermal cell migration. Required for efficient upward migration of bulge cells in response to wounding and this function is primarily rooted in its ability to coordinate microtubule dynamics and polarize hair follicle stem cells. As a regulator of actin and microtubule arrangement and stabilization, it plays an essential role in neurite outgrowth, branching and spine formation during brain development. The protein is Microtubule-actin cross-linking factor 1 of Rattus norvegicus (Rat).